A 387-amino-acid polypeptide reads, in one-letter code: Succinate--CoA ligase [ADP-forming] subunit beta (387 aa).

The ATP-grasp domain maps to 9–236 (KELFAKHNVP…KDATDPLELK (228 aa)). Residues Lys45, 52–54 (GRG), Ser94, and Glu99 each bind ATP. Mg(2+) contacts are provided by Asn191 and Asp205. Substrate contacts are provided by residues Asn256 and 318–320 (GIT).

The protein belongs to the succinate/malate CoA ligase beta subunit family. As to quaternary structure, heterotetramer of two alpha and two beta subunits. Requires Mg(2+) as cofactor.

It catalyses the reaction succinate + ATP + CoA = succinyl-CoA + ADP + phosphate. It carries out the reaction GTP + succinate + CoA = succinyl-CoA + GDP + phosphate. The protein operates within carbohydrate metabolism; tricarboxylic acid cycle; succinate from succinyl-CoA (ligase route): step 1/1. Its function is as follows. Succinyl-CoA synthetase functions in the citric acid cycle (TCA), coupling the hydrolysis of succinyl-CoA to the synthesis of either ATP or GTP and thus represents the only step of substrate-level phosphorylation in the TCA. The beta subunit provides nucleotide specificity of the enzyme and binds the substrate succinate, while the binding sites for coenzyme A and phosphate are found in the alpha subunit. In Mycolicibacterium gilvum (strain PYR-GCK) (Mycobacterium gilvum (strain PYR-GCK)), this protein is Succinate--CoA ligase [ADP-forming] subunit beta.